The sequence spans 514 residues: MSKSWNHDRAAKHIDQKIADVEEITIKDYVRDMSLESIPTSTAYRVDGVHMYADIMNLEDMLNITAVEGTECHKRTLRFLDQHYRAVKRILNKVDARRVDFHSQRLHSLFTKPYNTESGAETKRVQRAVATAQLIIDVLAETGDDDEQIPAAKVRIGIDTGLALAVNNGRSGYREPLFLGDPANHAAKLASNNKARGIYLTNNARKAIGLAESDEPEKSALTAIEIKACQDAAKLDVTSDEIVEEWREDLKKNPIGGYQFSRQTPPLRDMDIYSLTPANSKRQEMVSLYADIDGFTAYVADHINEKTDDVVRTLHVIRSELERVVTSDFEGRRVRFIGDCVQALSCDGTAHTTDEEKSVSEATRLAGALRSSFNLAIERLNAEGIETGDLGLAIGFDLGPIAVTRLGAKGNRVRCAIGRSVIESEKRQCACSGVETAIGQVAYDAASKAVQNLFGKSRKTSHLDYNEATEALADDGDASAKQARSEAYAGSAAIIRADERQVQPHSRQKVDGSR.

Guanylate cyclase domains lie at 49–190 and 286–428; these read VHMY…AKLA and VSLY…EKRQ. A ribonucleoside 5'-triphosphate contacts are provided by residues tyrosine 52, arginine 105, phenylalanine 178, 184–188, and 291–296; these read NHAAK and DIDGFT. Positions 291, 292, and 339 each coordinate Ca(2+). Aspartate 291 lines the Mn(2+) pocket. A disordered region spans residues 495 to 514; sequence IRADERQVQPHSRQKVDGSR. Positions 496–514 are enriched in basic and acidic residues; sequence RADERQVQPHSRQKVDGSR.

This sequence belongs to the adenylyl cyclase class-4/guanylyl cyclase family. Pyrimidine cyclase subfamily. As to quaternary structure, monomer. Requires a divalent metal cation as cofactor.

The protein localises to the cytoplasm. It carries out the reaction UTP = 3',5'-cyclic UMP + diphosphate. Pycsar (pyrimidine cyclase system for antiphage resistance) provides immunity against bacteriophage. The pyrimidine cyclase (PycC) synthesizes cyclic nucleotides in response to infection; these serve as specific second messenger signals. The signals activate the adjacent effector, leading to bacterial cell death and abortive phage infection. A clade A Pycsar system. Its function is as follows. The pyrimidine cyclase gene of a two-gene Pycsar system, generates cyclic UMP (cUMP) from UTP, has little to no activity on ATP, CTP or GTP. Expression of this and adjacent effector PaPycTIR (AC P0DV41) probably confers resistance to bacteriophage. The genes are probably only expressed in response to bacteriophage infection. Does not have adenylyl or guanylyl cyclase activity. This Pseudomonas aeruginosa protein is Uridylate cyclase.